Here is a 285-residue protein sequence, read N- to C-terminus: ATP synthase gamma chain (285 aa).

Belongs to the ATPase gamma chain family. As to quaternary structure, F-type ATPases have 2 components, CF(1) - the catalytic core - and CF(0) - the membrane proton channel. CF(1) has five subunits: alpha(3), beta(3), gamma(1), delta(1), epsilon(1). CF(0) has three main subunits: a, b and c.

Its subcellular location is the cell membrane. Produces ATP from ADP in the presence of a proton gradient across the membrane. The gamma chain is believed to be important in regulating ATPase activity and the flow of protons through the CF(0) complex. The polypeptide is ATP synthase gamma chain (Halalkalibacterium halodurans (strain ATCC BAA-125 / DSM 18197 / FERM 7344 / JCM 9153 / C-125) (Bacillus halodurans)).